Reading from the N-terminus, the 640-residue chain is 1-deoxy-D-xylulose-5-phosphate synthase (640 aa).

Thiamine diphosphate is bound by residues histidine 78 and 119–121; that span reads GHS. Aspartate 151 provides a ligand contact to Mg(2+). Thiamine diphosphate is bound by residues 152–153, asparagine 180, tyrosine 289, and glutamate 371; that span reads GA. Mg(2+) is bound at residue asparagine 180.

It belongs to the transketolase family. DXPS subfamily. As to quaternary structure, homodimer. Requires Mg(2+) as cofactor. Thiamine diphosphate serves as cofactor.

The enzyme catalyses D-glyceraldehyde 3-phosphate + pyruvate + H(+) = 1-deoxy-D-xylulose 5-phosphate + CO2. It participates in metabolic intermediate biosynthesis; 1-deoxy-D-xylulose 5-phosphate biosynthesis; 1-deoxy-D-xylulose 5-phosphate from D-glyceraldehyde 3-phosphate and pyruvate: step 1/1. Functionally, catalyzes the acyloin condensation reaction between C atoms 2 and 3 of pyruvate and glyceraldehyde 3-phosphate to yield 1-deoxy-D-xylulose-5-phosphate (DXP). The polypeptide is 1-deoxy-D-xylulose-5-phosphate synthase (Bartonella quintana (strain Toulouse) (Rochalimaea quintana)).